The primary structure comprises 139 residues: 3-hydroxyacyl-[acyl-carrier-protein] dehydratase FabZ (139 aa).

The active site involves H46.

The protein belongs to the thioester dehydratase family. FabZ subfamily.

The protein resides in the cytoplasm. The catalysed reaction is a (3R)-hydroxyacyl-[ACP] = a (2E)-enoyl-[ACP] + H2O. Involved in unsaturated fatty acids biosynthesis. Catalyzes the dehydration of short chain beta-hydroxyacyl-ACPs and long chain saturated and unsaturated beta-hydroxyacyl-ACPs. In Streptococcus pyogenes serotype M1, this protein is 3-hydroxyacyl-[acyl-carrier-protein] dehydratase FabZ.